The chain runs to 75 residues: Exodeoxyribonuclease 7 small subunit (75 aa).

The protein belongs to the XseB family. As to quaternary structure, heterooligomer composed of large and small subunits.

Its subcellular location is the cytoplasm. It catalyses the reaction Exonucleolytic cleavage in either 5'- to 3'- or 3'- to 5'-direction to yield nucleoside 5'-phosphates.. Bidirectionally degrades single-stranded DNA into large acid-insoluble oligonucleotides, which are then degraded further into small acid-soluble oligonucleotides. This chain is Exodeoxyribonuclease 7 small subunit, found in Chlamydia abortus (strain DSM 27085 / S26/3) (Chlamydophila abortus).